Reading from the N-terminus, the 194-residue chain is Peptidyl-tRNA hydrolase (194 aa).

Y17 contacts tRNA. The Proton acceptor role is filled by H22. The tRNA site is built by F68, N70, and N116.

The protein belongs to the PTH family. In terms of assembly, monomer.

The protein resides in the cytoplasm. It catalyses the reaction an N-acyl-L-alpha-aminoacyl-tRNA + H2O = an N-acyl-L-amino acid + a tRNA + H(+). Its function is as follows. Hydrolyzes ribosome-free peptidyl-tRNAs (with 1 or more amino acids incorporated), which drop off the ribosome during protein synthesis, or as a result of ribosome stalling. Catalyzes the release of premature peptidyl moieties from peptidyl-tRNA molecules trapped in stalled 50S ribosomal subunits, and thus maintains levels of free tRNAs and 50S ribosomes. In Haemophilus influenzae (strain ATCC 51907 / DSM 11121 / KW20 / Rd), this protein is Peptidyl-tRNA hydrolase.